Here is a 494-residue protein sequence, read N- to C-terminus: Cheilanthifoline synthase (494 aa).

A helical membrane pass occupies residues 4–24 (TIWLIISTVIIVLGIAKFLLG). Cys437 is a heme binding site.

The protein belongs to the cytochrome P450 family. Requires heme as cofactor. In terms of tissue distribution, expressed in roots and at lower levels in stems, leaves and plantlets.

The protein resides in the endoplasmic reticulum membrane. The catalysed reaction is (S)-scoulerine + reduced [NADPH--hemoprotein reductase] + O2 = (S)-cheilanthifoline + oxidized [NADPH--hemoprotein reductase] + 2 H2O + H(+). Methylenedioxy bridge-forming cytochrome P450 involved in the biosynthesis of isoquinoline alkaloids. Converts (S)-scoulerine into (S)-cheilanthifoline, a precursor of sanguinarine. Catalyzes an oxidative reaction that does not incorporate oxygen into the product. The sequence is that of Cheilanthifoline synthase from Argemone mexicana (Mexican prickly poppy).